Here is a 145-residue protein sequence, read N- to C-terminus: Protein BUD31 homolog 2 (145 aa).

It belongs to the BUD31 (G10) family.

Its subcellular location is the nucleus. The protein is Protein BUD31 homolog 2 of Oryza sativa subsp. japonica (Rice).